Here is a 295-residue protein sequence, read N- to C-terminus: Homeobox protein XHOX-7.1 (295 aa).

Disordered stretches follow at residues 75-115 (RKPG…PISL) and 134-175 (KPES…KPRT). The segment covering 84-97 (SSPTGSPLAGTSHS) has biased composition (polar residues). Positions 141–153 (SSWIQSPSFSPSP) are enriched in low complexity. The span at 164-174 (LRKHKTNRKPR) shows a compositional bias: basic residues. A DNA-binding region (homeobox) is located at residues 170–229 (NRKPRTPFTTSQLLALERKFRQKQYLSIAERAEFSSSLNLTETQVKIWFQNRRAKAKRLQ).

The protein belongs to the Msh homeobox family.

It localises to the nucleus. The protein is Homeobox protein XHOX-7.1 of Xenopus laevis (African clawed frog).